A 461-amino-acid chain; its full sequence is Lysosomal proton-coupled steroid conjugate and bile acid symporter SLC46A3 (461 aa).

The first 25 residues, 1–25 (MKISFIEPAILLYAFAMTLTIPLTA), serve as a signal peptide directing secretion. The Extracellular portion of the chain corresponds to 26–70 (QYVYRRIWEETGNYTFTSSSNVSECEQNKSSSTFAFQEEVQKKAS). 3 N-linked (GlcNAc...) asparagine glycosylation sites follow: Asn38, Asn46, and Asn53. A helical transmembrane segment spans residues 71–91 (LFSLQVEISGLIPGLVSTFML). At 92 to 103 (LSSSDNHGRKLP) the chain is on the cytoplasmic side. Residues 104-124 (MVLSSLGSLGTNLWLCAMSYF) traverse the membrane as a helical segment. The Extracellular segment spans residues 125–135 (DLPLQLLVAST). The helical transmembrane segment at 136-156 (FIGALFGNYTTFWGACFAYIV) threads the bilayer. Residues 157 to 170 (DQEKEYKHRIIRIA) lie on the Cytoplasmic side of the membrane. A helical membrane pass occupies residues 171–191 (VLDFMLGVVTGLTGLSSGYFI). Residues 192 to 197 (RELGFA) lie on the Extracellular side of the membrane. A helical membrane pass occupies residues 198-218 (WSYFIIAVVVLVNLAYILFFL). The Cytoplasmic portion of the chain corresponds to 219-260 (SDPIKESSSQIVTMSCSESLKDLFYRTYMLFKNGSCKRRSLL). The helical transmembrane segment at 261–281 (CLLIFTLVVYFFVVFGITPVF) threads the bilayer. Residues 282-301 (TLYELGPPLCWNEVYIGYGS) lie on the Extracellular side of the membrane. A helical transmembrane segment spans residues 302-322 (ALGSLSFLSSFLGIWLFSYCL). Over 323–324 (KD) the chain is Cytoplasmic. The chain crosses the membrane as a helical span at residues 325–345 (IHIAYVGIFTTMVGMMLTAFT). The Extracellular segment spans residues 346-347 (RT). A helical transmembrane segment spans residues 348–368 (TLMMFLVRISFFFTIMPLSIL). Over 369–381 (RSMLSKVVHSTEQ) the chain is Cytoplasmic. The chain crosses the membrane as a helical span at residues 382–402 (GVLFACIAFLETLGGVTSTSA). At 403-415 (YNGIYSATVAWYP) the chain is on the extracellular side. The helical transmembrane segment at 416 to 436 (GFVFLLSAGLLVLPAVSLCMV) threads the bilayer. The Cytoplasmic portion of the chain corresponds to 437–461 (KCIGWEEGSYTLLIHDEPSEHTSDS). A Tyrosine-based lysosomal-sorting motif motif is present at residues 446–449 (YTLL).

Belongs to the major facilitator superfamily. SLC46A family.

It localises to the lysosome membrane. The enzyme catalyses estrone 3-sulfate(out) + n H(+)(out) = estrone 3-sulfate(in) + n H(+)(in). The catalysed reaction is 25-hydroxyvitamin D3 sulfate(out) + n H(+)(out) = 25-hydroxyvitamin D3 sulfate(in) + n H(+)(in). It carries out the reaction cholate(out) + n H(+)(out) = cholate(in) + n H(+)(in). It catalyses the reaction glycocholate(out) + n H(+)(out) = glycocholate(in) + n H(+)(in). The enzyme catalyses taurocholate(out) + n H(+)(out) = taurocholate(in) + n H(+)(in). The catalysed reaction is dehydroepiandrosterone 3-sulfate(out) + n H(+)(out) = dehydroepiandrosterone 3-sulfate(in) + n H(+)(in). It carries out the reaction N-acetyl-D-muramoyl-L-alanyl-D-isoglutamine(out) + n H(+)(out) = N-acetyl-D-muramoyl-L-alanyl-D-isoglutamine(in) + n H(+)(in). It catalyses the reaction 2',3'-cGAMP(out) + n H(+)(out) = 2',3'-cGAMP(in) + n H(+)(in). Lysosomal proton-coupled steroid conjugate and bile acid transporter. Preferentially recognizes lipophilic steroid conjugates or bile acis as endogenous substrates and seems to mediate escape from lysosomes to the cytoplasm. Modulates hepatic cytosolic copper homeostasis, maybe acting as a lysosomal copper transporter and sequestering copper ions in the lysosome. Delivers pathogen-associated molecular patterns to cytosolic pattern recognition receptors as part of the innate immune response to microbes. Selectively transports bacterial muramyl dipeptide (MDP) into the cytosol for recognition by NOD2, triggering inflammatory responses. Likely acts as a redundant importer of cyclic GMP-AMP dinucleotides (cGAMPs) in monocyte and macrophage cell lineages. The transport mechanism, its electrogenicity and stoichiometry remain to be elucidated. The protein is Lysosomal proton-coupled steroid conjugate and bile acid symporter SLC46A3 (Slc46a3) of Rattus norvegicus (Rat).